Consider the following 484-residue polypeptide: Fork head protein homolog 1 (484 aa).

The FHA domain maps to 76–142 (VTIGRNTDSL…NGAKVNFRRI (67 aa)). Residues 302 to 393 (IKPPQSYASM…RRDFLNKWNA (92 aa)) constitute a DNA-binding region (fork-head).

In terms of assembly, interacts (via FHA domain) with ECM30, GLN3, URE2, MPH1 AND FDO1. Interacts with the origin recognition complex (ORC) composed of ORC1 to ORC6.

It localises to the nucleus. It is found in the cytoplasm. The protein localises to the cytosol. Functionally, transcription factor that regulates the expression of the CLB2 cluster of genes during the G2/M phase of the mitotic cell cycle. The CLB2 cluster of genes includes mitotic regulators such as CLB1, CLB2, CDC5 and CDC20 as well as SWI5 and ACE2, transcription factors required for the subsequent temporal wave of cell cycle regulated gene expression in the M/G1 phase interval. Involved in HMRa silencing. FKH1 and FKH2 associate with the coding regions of active genes and influence, in opposing ways, transcriptional elongation and termination, and coordinate early transcription elongation and pre-mRNA processing. Both FKH1 and FKH2 play a role as regulators of lifespan in collaboration with the anaphase-promoting complex (APC), likely through combined regulation of stress response, genomic stability, and cell cycle regulation. FKH1 and FKH2 function also in controlling yeast cell morphology by preventing preudohyphal growth. Acts as a rate-limiting replication origin activator via its interaction with the origin recognition complex (ORC). Plays a transcription-independent role in recombination donor preference during mating-type switching through binding to the recombination enhancer (RE), a 700-bp cis-acting element that controls recombination along the left arm of chromosome III. The polypeptide is Fork head protein homolog 1 (Saccharomyces cerevisiae (strain ATCC 204508 / S288c) (Baker's yeast)).